The primary structure comprises 165 residues: Adenine phosphoribosyltransferase (165 aa).

Belongs to the purine/pyrimidine phosphoribosyltransferase family. In terms of assembly, homodimer.

Its subcellular location is the cytoplasm. It catalyses the reaction AMP + diphosphate = 5-phospho-alpha-D-ribose 1-diphosphate + adenine. Its pathway is purine metabolism; AMP biosynthesis via salvage pathway; AMP from adenine: step 1/1. Its function is as follows. Catalyzes a salvage reaction resulting in the formation of AMP, that is energically less costly than de novo synthesis. The polypeptide is Adenine phosphoribosyltransferase (Bdellovibrio bacteriovorus (strain ATCC 15356 / DSM 50701 / NCIMB 9529 / HD100)).